Consider the following 906-residue polypeptide: MSAATERERLTNANPNARGKDNSGAAIRQRFLKFYETRGHAVLPSSSLVPEDPTVLLTIAGMLQFKPVFMGQRERAHERATTTQKCVRTNDIENVGVTARHHTFFEMLGNFSFGDYFKKDACQWAWELATGEFGLNPERVWVSVFREDDEAFAIWRDVVGVPESRIKRMDEKDNFWAAGPTGPCGPCSELYYDFYPERGLEGADLDDDSRFIEFYNLVFMELNRDADGGVTPLKNKNIDTGMGLERMAQILQGVPNNYETDLIMPIINKAASMAGIDYNACNDVQKQQLKVIGDHTRAVSYMISDGVFASNIGRGYIVRRLLRRVVRNGRLLGIKPEEGASAFTPAIAEVAISMSEGCDPQVAKNSARILAELEREELSFQKTLGRGEEMLAELIETAKKTKTGLSGKDAFTLYDTYGFPLDITADVATEAGITVDLEGFESAMAEQRSMSQAAHQTVDVTAGNALARVADELGAKSTFIGYESTSSDVSNVLAIVCGGESVEEAPEGAKVDIVLDVTPFYAESGGQVGDNGVLHTADGATLEVSDVQKAGGGRIIVHTATVTKGSIKKGSQVTANVDENSRRRAKSNHTATHLLQSALKKVLGEDVSQAGSLCGFDRLRFDFNSPKAPTEAQLLEVENLVNGWISQSAALTAEEMPIAAAKDKGATMMFGEKYGDVVRVVDVPGISMELCGGTHVSNTAEIGGFKILSEAGIASGIRRIEAVAGAGVVELLQQRDAVVKQLASALRVPPEEITGRVSSLQEDLRATQKLAESLRGELAVAKAGALVSQAREVGEAKVLVARLDGVDPAALKVAAENLAAQLGDGAAIVLGSANGANVGLVALFDDKVQKDGGLKAGQVLGAAAKKCGGGGGGKPGFAQAGGRDATQLDAALDEALTTVTAALSPK.

Positions 1-10 (MSAATERERL) are enriched in basic and acidic residues. The segment at 1 to 22 (MSAATERERLTNANPNARGKDN) is disordered. Zn(2+) contacts are provided by His-589, His-593, Cys-691, and His-695.

The protein belongs to the class-II aminoacyl-tRNA synthetase family. In terms of assembly, monomer. Zn(2+) serves as cofactor.

Its subcellular location is the plastid. The protein localises to the chloroplast. It is found in the mitochondrion. The enzyme catalyses tRNA(Ala) + L-alanine + ATP = L-alanyl-tRNA(Ala) + AMP + diphosphate. Catalyzes the attachment of alanine to tRNA(Ala) in a two-step reaction: alanine is first activated by ATP to form Ala-AMP and then transferred to the acceptor end of tRNA(Ala). Also edits incorrectly charged tRNA(Ala) via its editing domain. This is Alanine--tRNA ligase, chloroplastic/mitochondrial from Ostreococcus lucimarinus (strain CCE9901).